A 946-amino-acid polypeptide reads, in one-letter code: Aminopeptidase N (946 aa).

The first 15 residues, 1-15 (MRLLICLTLLGLVCG), serve as a signal peptide directing secretion. The N-linked (GlcNAc...) asparagine glycan is linked to N60. 308 to 312 (GAMEN) lines the substrate pocket. Residue H344 participates in Zn(2+) binding. The active-site Proton acceptor is the E345. Zn(2+) is bound by residues H348 and E367. N550 and N605 each carry an N-linked (GlcNAc...) asparagine glycan. 2 disulfide bridges follow: C715-C722 and C751-C787.

The protein belongs to the peptidase M1 family. Zn(2+) serves as cofactor.

The protein localises to the cell membrane. The enzyme catalyses Release of an N-terminal amino acid, Xaa-|-Yaa- from a peptide, amide or arylamide. Xaa is preferably Ala, but may be most amino acids including Pro (slow action). When a terminal hydrophobic residue is followed by a prolyl residue, the two may be released as an intact Xaa-Pro dipeptide.. This chain is Aminopeptidase N (APN1), found in Plutella xylostella (Diamondback moth).